A 216-amino-acid polypeptide reads, in one-letter code: Probable RNA 2'-phosphotransferase 2 (216 aa).

This sequence belongs to the KptA/TPT1 family.

Removes the 2'-phosphate from RNA via an intermediate in which the phosphate is ADP-ribosylated by NAD followed by a presumed transesterification to release the RNA and generate ADP-ribose 1''-2''-cyclic phosphate (APPR&gt;P). May function as an ADP-ribosylase. The polypeptide is Probable RNA 2'-phosphotransferase 2 (kptA2) (Archaeoglobus fulgidus (strain ATCC 49558 / DSM 4304 / JCM 9628 / NBRC 100126 / VC-16)).